Consider the following 95-residue polypeptide: MSFKFEAEVRSAQGKGASRRLRHNGQVPAIIYGGKAEAVSIILDHDKVNNAQAHDAFYNEVLTIVVAGKEEQVKVQAIQRHPTKPKLVHLDFKRI.

This sequence belongs to the bacterial ribosomal protein bL25 family. In terms of assembly, part of the 50S ribosomal subunit; part of the 5S rRNA/L5/L18/L25 subcomplex. Contacts the 5S rRNA. Binds to the 5S rRNA independently of L5 and L18.

In terms of biological role, this is one of the proteins that binds to the 5S RNA in the ribosome where it forms part of the central protuberance. This chain is Large ribosomal subunit protein bL25, found in Glaesserella parasuis serovar 5 (strain SH0165) (Haemophilus parasuis).